The chain runs to 84 residues: Beta-toxin Ct16 (84 aa).

The signal sequence occupies residues 1–19; it reads MNYFILLFVATFLLLDVNC. The LCN-type CS-alpha/beta domain maps to 21–80; the sequence is KDGYPVDANNCKFECWKNEYCDELCKAKRAESGYCYKLKLSCWCEGLPDDEPTKTSDRCY. 4 disulfides stabilise this stretch: Cys-31–Cys-79, Cys-35–Cys-55, Cys-41–Cys-62, and Cys-45–Cys-64. Thr-82 is subject to Threonine amide.

Belongs to the long (4 C-C) scorpion toxin superfamily. Sodium channel inhibitor family. Alpha subfamily. In terms of tissue distribution, expressed by the venom gland.

Its subcellular location is the secreted. Functionally, alpha toxins bind voltage-independently at site-3 of sodium channels (Nav) and inhibit the inactivation of the activated channels, thereby blocking neuronal transmission. Is possibly toxic to mice. The protein is Beta-toxin Ct16 of Centruroides tecomanus (Scorpion).